Consider the following 565-residue polypeptide: Adenine deaminase 1 (565 aa).

The protein belongs to the metallo-dependent hydrolases superfamily. Adenine deaminase family. The cofactor is Mn(2+).

The enzyme catalyses adenine + H2O + H(+) = hypoxanthine + NH4(+). In Rhizobium etli (strain ATCC 51251 / DSM 11541 / JCM 21823 / NBRC 15573 / CFN 42), this protein is Adenine deaminase 1.